We begin with the raw amino-acid sequence, 382 residues long: MTVEKSVVFKAEGEHFTDQKGNTIVGSGSGGTTKYFRIPAMCTTSKGTIVVFADARHNTASDQSFIDTAAARSTDGGKTWNKKIAIYNDRVNSKLSRVMDPTCIVANIQGRETILVMVGKWNNNDKTWGAYRDKAPDTDWDLVLYKSTDDGVTFSKVETNIHDIVTKNGTISAMLGGVGSGLQLNDGKLVFPVQMVRTKNITTVLNTSFIYSTDGITWSLPSGYCEGFGSENNIIEFNASLVNNIRNSGLRRSFETKDFGKTWTEFPPMDKKVDNRNHGVQGSTITIPSGNKLVAAHSSAQNKNNDYTRSDISLYAHNLYSGEVKLIDDFYPKVGNASGAGYSCLSYRKNVDKETLYVVYEANGSIEFQDLSRHLPVIKSYN.

Residue Arg-37 participates in substrate binding. A disulfide bridge links Cys-42 with Cys-103. The active-site Proton acceptor is Asp-62. 3 BNR repeats span residues 71–82, 145–156, and 210–220; these read ARSTDGGKTWNK, YKSTDDGVTFSK, and IYSTDGITWSL. Residue Arg-246 coordinates substrate. Residues 254–265 form a BNR 4 repeat; it reads FETKDFGKTWTE. Arg-309 is a substrate binding site. Tyr-342 (nucleophile) is an active-site residue. The active site involves Glu-361.

This sequence belongs to the glycosyl hydrolase 33 family. Monomer.

It catalyses the reaction Hydrolysis of alpha-(2-&gt;3)-, alpha-(2-&gt;6)-, alpha-(2-&gt;8)- glycosidic linkages of terminal sialic acid residues in oligosaccharides, glycoproteins, glycolipids, colominic acid and synthetic substrates.. In terms of biological role, cleaves the terminal sialic acid (N-acetyl neuraminic acid) from carbohydrate chains in glycoproteins providing free sialic acid which can be used as carbon and energy sources. Sialidases have been suggested to be pathogenic factors in microbial infections. This Salmonella typhimurium (strain LT2 / SGSC1412 / ATCC 700720) protein is Sialidase (nanH).